The sequence spans 445 residues: Rab GDP dissociation inhibitor beta (445 aa).

Methionine 1 is modified (N-acetylmethionine). The residue at position 57 (lysine 57) is an N6-succinyllysine. Lysine 112 carries the N6-acetyllysine modification. The residue at position 130 (serine 130) is a Phosphoserine. At lysine 269 the chain carries N6-acetyllysine. Serine 382 is subject to Phosphoserine.

The protein belongs to the Rab GDI family. As to quaternary structure, interacts with RHOH. Interacts with the GDP-bound inactive forms of RAB3A, RAB3B, RAB3C, RAB5A, RAB5B, RAB5C, RAB8A, RAB8B, RAB10, RAB12, RAB35, and RAB43; binds RAB3D to a lesser extent. Interacts with DZIP1; this interaction negatively regulates the interaction of GDI2 with GDP-bound RAB8A. Ubiquitously expressed.

The protein localises to the cytoplasm. It is found in the membrane. The protein resides in the golgi apparatus. Its subcellular location is the trans-Golgi network. In terms of biological role, GDP-dissociation inhibitor preventing the GDP to GTP exchange of most Rab proteins. By keeping these small GTPases in their inactive GDP-bound form regulates intracellular membrane trafficking. Negatively regulates protein transport to the cilium and ciliogenesis through the inhibition of RAB8A. The chain is Rab GDP dissociation inhibitor beta (Gdi2) from Rattus norvegicus (Rat).